Consider the following 293-residue polypeptide: Short-chain dehydrogenase/reductase PhomF (293 aa).

2 residues coordinate NADP(+): Ile-31 and Asn-102. Ser-175 (proton donor) is an active-site residue. Tyr-190, Lys-194, and Ser-225 together coordinate NADP(+). Residue Tyr-190 is the Proton acceptor of the active site. Catalysis depends on Lys-194, which acts as the Lowers pKa of active site Tyr.

The protein belongs to the short-chain dehydrogenases/reductases (SDR) family.

In terms of biological role, short-chain dehydrogenase/reductase; part of the gene cluster that mediates the biosynthesis of the phomopsins, a group of hexapeptide mycotoxins which infects lupins and causes lupinosis disease in livestock. The role of phomF within the phomopsins biosynthesis pathway has still to be determined. The pathway starts with the processing of the precursor phomA by several endopeptidases including kexin proteases as well as the cluster-specific S41 family peptidase phomP1 and the oligopeptidase phomG to produce 10 identical copies of the hexapeptide Tyr-Val-Ile-Pro-Ile-Asp. After being excised from the precursor peptide, the core peptides are cyclized and modified post-translationally by enzymes encoded within the gene cluster. The timing and order of proteolysis of the phomA precursor and PTMs are still unknown. Two tyrosinase-like enzymes, phomQ1 and phomQ2, catalyze the chlorination and hydroxylation of Tyr, respectively. PhomYb, is proposed to be involved in the construction of the macrocyclic structure. The other 4 ustYa family proteins may be involved in PTMs that generate the unique structure of phomopsin A. PhomYa is required for the hydroxylation of C-beta of Tyr. PhomYc, phomYd, and phomYe are responsible for the biosynthesis of 2,3-dehydroisoleucine (dIle), 2,3-dehydroaspartic acid (dAsp), and 3,4-dehydroproline (dPro), respectively. While dIle formation by phomYc is indispensable for the installation of dAsp by phomYd, the order of the other PTMs have not been elucidated yet. Most of the biosynthetic enzymes likely have broad substrate specificity, and thus, there might be a metabolic grid from a precursor to phomopsin A. The enzyme(s) responsible for the biosynthesis of 3,4-dehydrovaline (dVal) have also not been identified yet. Finally, phomM acts as an S-adenosylmethionine-dependent alpha-N-methyltransferase that catalyzes two successive N-methylation reactions, converting N-desmethyl-phomopsin A to phomopsin A and phomopsin A further to an N,N-dimethylated congener called phomopsin E. The chain is Short-chain dehydrogenase/reductase PhomF from Diaporthe leptostromiformis (Lupinosis disease fungus).